A 706-amino-acid chain; its full sequence is Protein MAM3 (706 aa).

Topologically, residues 1 to 16 (MSFLPLRSRSRSGAPH) are vacuolar. The chain crosses the membrane as a helical span at residues 17–37 (WVYIILYHIFTIPKIYSLPLL). Residues 38–65 (SGSHVLNSRDVADSGHSVGDEASVTTYY) lie on the Cytoplasmic side of the membrane. A CNNM transmembrane domain is found at 57-240 (DEASVTTYYI…MGVERLTKDE (184 aa)). The chain crosses the membrane as a helical span at residues 66–86 (IISIILVLLGGVFAGLTLGLM). The Vacuolar portion of the chain corresponds to 87–120 (GQDEVYLKVISTSGSNSEKKLAKRVLDLISRGKH). The helical transmembrane segment at 121–141 (WVLVTLLLSNVITNETLPIVL) threads the bilayer. The Cytoplasmic segment spans residues 142-145 (DRCL). The helical transmembrane segment at 146-166 (GGGWQAVVSSTILIVIFGEII) threads the bilayer. Topologically, residues 167–177 (PQSVCVKYGLQ) are vacuolar. The helical transmembrane segment at 178 to 198 (VGAFFCPFVLVLMYLMYPVAY) threads the bilayer. Over 199–706 (PIATLLDYML…ANGSSSTIKR (508 aa)) the chain is Cytoplasmic. CBS domains are found at residues 259–320 (MTPI…DCLP) and 321–386 (ISHF…IVDE). 3 disordered regions span residues 421 to 495 (SHKE…ASNP), 515 to 540 (ITTHTPHSSKEPSPAPHSNDKSLSAE), and 557 to 597 (LHTQ…ENQN). The span at 433-445 (ESSPLLSPSNSNH) shows a compositional bias: low complexity. Phosphoserine is present on residues serine 439 and serine 447. Polar residues predominate over residues 472–495 (AVLSPTPQVTEHGTIIPSNLASNP). Position 527 is a phosphoserine (serine 527). Positions 566–575 (TQVTTSTKTT) are enriched in low complexity. Positions 576–597 (RNSPDSISIPNSGANHGNENQN) are enriched in polar residues. A Phosphoserine modification is found at serine 603. Residue tyrosine 604 is modified to Phosphotyrosine. Residue threonine 607 is modified to Phosphothreonine. The residue at position 614 (serine 614) is a Phosphoserine. The tract at residues 626–706 (IGPAKDWDES…ANGSSSTIKR (81 aa)) is disordered. Positions 630-639 (KDWDESKSEY) are enriched in basic and acidic residues. A compositionally biased stretch (low complexity) spans 658–680 (SSSNASLFSSIKNKFKNENANNN). A compositionally biased stretch (polar residues) spans 681 to 706 (DRSNFTDSLSRTSNYDANGSSSTIKR).

This sequence belongs to the ACDP family.

Its subcellular location is the vacuole membrane. Its function is as follows. Involved in metal homeostasis and more specially in manganese sensitivity. In Saccharomyces cerevisiae (strain ATCC 204508 / S288c) (Baker's yeast), this protein is Protein MAM3 (MAM3).